Reading from the N-terminus, the 269-residue chain is MVQRQINWSLIDRVRAKNPIVLNLANLVTIDKVADAVSAVGASPIMSVEPAEADEMVMLANALSINLGTINEHQATQIRTVLRAATPLKPLVLDPVAVSAVPSRLKFAHSLLNDFHFDVIRGNASEIAALVEADNTSHGIDAGKVPNQVQIAETCARRYHSIVVLTGETDIITDGQVVYENPFSAEMLTMNVGSGDMLSSIIAAFLGITTNTWDACIVATVLVSAAGVLANRYSVGLGSWQVQFFDQLSIMDTKALLEFFDESEEDYLD.

Met46 lines the substrate pocket. ATP contacts are provided by Arg121 and Thr166. Position 193 (Gly193) interacts with substrate.

The protein belongs to the Thz kinase family. Requires Mg(2+) as cofactor.

The catalysed reaction is 5-(2-hydroxyethyl)-4-methylthiazole + ATP = 4-methyl-5-(2-phosphooxyethyl)-thiazole + ADP + H(+). It participates in cofactor biosynthesis; thiamine diphosphate biosynthesis; 4-methyl-5-(2-phosphoethyl)-thiazole from 5-(2-hydroxyethyl)-4-methylthiazole: step 1/1. Its function is as follows. Catalyzes the phosphorylation of the hydroxyl group of 4-methyl-5-beta-hydroxyethylthiazole (THZ). The sequence is that of Hydroxyethylthiazole kinase from Limosilactobacillus reuteri (strain DSM 20016) (Lactobacillus reuteri).